A 637-amino-acid chain; its full sequence is Chaperone protein DnaK (637 aa).

Thr203 is subject to Phosphothreonine; by autocatalysis. The interval 600 to 637 (SAVYGQQQEQGAPAQEEPSAEGKKNDDEGTVEGEFREV) is disordered. Residues 604-616 (GQQQEQGAPAQEE) show a composition bias toward low complexity. Residues 619-637 (AEGKKNDDEGTVEGEFREV) are compositionally biased toward basic and acidic residues.

Belongs to the heat shock protein 70 family.

In terms of biological role, acts as a chaperone. The polypeptide is Chaperone protein DnaK (Dehalococcoides mccartyi (strain ATCC BAA-2266 / KCTC 15142 / 195) (Dehalococcoides ethenogenes (strain 195))).